We begin with the raw amino-acid sequence, 163 residues long: Transcription elongation factor GreA (163 aa).

Residues Tyr12–Gln73 are a coiled coil.

This sequence belongs to the GreA/GreB family.

In terms of biological role, necessary for efficient RNA polymerase transcription elongation past template-encoded arresting sites. The arresting sites in DNA have the property of trapping a certain fraction of elongating RNA polymerases that pass through, resulting in locked ternary complexes. Cleavage of the nascent transcript by cleavage factors such as GreA or GreB allows the resumption of elongation from the new 3'terminus. GreA releases sequences of 2 to 3 nucleotides. The chain is Transcription elongation factor GreA from Nitratiruptor sp. (strain SB155-2).